We begin with the raw amino-acid sequence, 430 residues long: Enolase (430 aa).

Glutamine 163 provides a ligand contact to (2R)-2-phosphoglycerate. Glutamate 205 serves as the catalytic Proton donor. Residues aspartate 242, glutamate 286, and aspartate 313 each contribute to the Mg(2+) site. Lysine 338, arginine 367, serine 368, and lysine 389 together coordinate (2R)-2-phosphoglycerate. Lysine 338 functions as the Proton acceptor in the catalytic mechanism.

Belongs to the enolase family. Mg(2+) serves as cofactor.

Its subcellular location is the cytoplasm. It is found in the secreted. The protein localises to the cell surface. The enzyme catalyses (2R)-2-phosphoglycerate = phosphoenolpyruvate + H2O. The protein operates within carbohydrate degradation; glycolysis; pyruvate from D-glyceraldehyde 3-phosphate: step 4/5. Its function is as follows. Catalyzes the reversible conversion of 2-phosphoglycerate (2-PG) into phosphoenolpyruvate (PEP). It is essential for the degradation of carbohydrates via glycolysis. The protein is Enolase of Geotalea daltonii (strain DSM 22248 / JCM 15807 / FRC-32) (Geobacter daltonii).